The sequence spans 177 residues: Large ribosomal subunit protein uL6 (177 aa).

This sequence belongs to the universal ribosomal protein uL6 family. As to quaternary structure, part of the 50S ribosomal subunit.

Its function is as follows. This protein binds to the 23S rRNA, and is important in its secondary structure. It is located near the subunit interface in the base of the L7/L12 stalk, and near the tRNA binding site of the peptidyltransferase center. The polypeptide is Large ribosomal subunit protein uL6 (Brucella canis (strain ATCC 23365 / NCTC 10854 / RM-666)).